Here is a 176-residue protein sequence, read N- to C-terminus: Large ribosomal subunit protein uL5 (176 aa).

Belongs to the universal ribosomal protein uL5 family. In terms of assembly, part of the 50S ribosomal subunit; contacts the 5S rRNA and probably tRNA. Forms a bridge to the 30S subunit in the 70S ribosome.

Functionally, this is one of the proteins that bind and probably mediate the attachment of the 5S RNA into the large ribosomal subunit, where it forms part of the central protuberance. In the 70S ribosome it contacts protein S13 of the 30S subunit (bridge B1b), connecting the 2 subunits; this bridge is implicated in subunit movement. May contact the P site tRNA; the 5S rRNA and some of its associated proteins might help stabilize positioning of ribosome-bound tRNAs. This chain is Large ribosomal subunit protein uL5, found in Picrophilus torridus (strain ATCC 700027 / DSM 9790 / JCM 10055 / NBRC 100828 / KAW 2/3).